The primary structure comprises 559 residues: MPLVKRNIDPRHLCHTALPRGIKNELECVTNISLANIIRQLSSLSKYAEDIFGELFNEAHSFSFRVNSLQERVDRLSVSVTQLDPKEEELSLQDITMRKAFRSSTIQDQQLFDRKTLPIPLQETYDVCEQPPPLNILTPYRDDGKEGLKFYTNPSYFFDLWKEKMLQDTEDKRKEKRKQKQKNLDRPHEPEKVPRAPHDRRREWQKLAQGPELAEDDANLLHKHIEVANGPASHFETRPQTYVDHMDGSYSLSALPFSQMSELLTRAEERVLVRPHEPPPPPPMHGAGEAKPIPTCISSATGLIENRPQSPATGRTPVFVSPTPPPPPPPLPSALSTSSLRASMTSTPPPPVPPPPPPPATALQAPAVPPPPAPLQIAPGVLHPAPPPIAPPLVQPSPPVARAAPVCETVPVHPLPQGEVQGLPPPPPPPPLPPPGIRPSSPVTVTALAHPPSGLHPTPSTAPGPHVPLMPPSPPSQVIPASEPKRHPSTLPVISDARSVLLEAIRKGIQLRKVEEQREQEAKHERIENDVATILSRRIAVEYSDSEDDSEFDEVDWLE.

Disordered stretches follow at residues 170–202 (EDKR…DRRR), 304–383 (IENR…GVLH), and 412–490 (VHPL…HPST). Positions 182-202 (KNLDRPHEPEKVPRAPHDRRR) are enriched in basic and acidic residues. Polar residues predominate over residues 304 to 313 (IENRPQSPAT). Over residues 322-332 (PTPPPPPPPLP) the composition is skewed to pro residues. Residues 333-346 (SALSTSSLRASMTS) are compositionally biased toward low complexity. At R341 the chain carries Asymmetric dimethylarginine; alternate. R341 bears the Omega-N-methylarginine; alternate mark. Composition is skewed to pro residues over residues 347 to 360 (TPPP…PPPA), 423 to 437 (LPPP…PPGI), and 460 to 477 (STAP…PPSQ). S489 carries the phosphoserine modification. The region spanning 497–514 (ARSVLLEAIRKGIQLRKV) is the WH2 domain.

Belongs to the SCAR/WAVE family. In terms of assembly, component of the WAVE1 complex composed of ABI2, CYFIP1 or CYFIP2, BRK1, NCKAP1 and WASF1/WAVE1. Within the complex, a heterodimer containing NCKAP1 and CYFIP1 interacts with a heterotrimer formed by WAVE1, ABI2 and BRK1. CYFIP2 binds to activated RAC1 which causes the complex to dissociate, releasing activated WASF1. The complex can also be activated by NCK1. Binds actin and the Arp2/3 complex. Interacts with BAIAP2. Interacts with SHANK3; the interaction mediates the association of SHANK3 with the WAVE1 complex. Interacts with ABI1 (via N-terminus). Interacts with SORBS2; this interaction greatly enhances phosphorylation by ABL1 and dephosphorylation by PTPN12 and might mediate partial to focal adhesion sites.

It localises to the cytoplasm. The protein localises to the cytoskeleton. Its subcellular location is the synapse. The protein resides in the cell junction. It is found in the focal adhesion. Its function is as follows. Downstream effector molecule involved in the transmission of signals from tyrosine kinase receptors and small GTPases to the actin cytoskeleton. Promotes formation of actin filaments. Part of the WAVE complex that regulates lamellipodia formation. The WAVE complex regulates actin filament reorganization via its interaction with the Arp2/3 complex. As component of the WAVE1 complex, required for BDNF-NTRK2 endocytic trafficking and signaling from early endosomes. Also involved in the regulation of mitochondrial dynamics. The sequence is that of Actin-binding protein WASF1 (WASF1) from Pongo abelii (Sumatran orangutan).